The chain runs to 433 residues: MSQTLQAVRGMNDILPDEAETWEHFEDIVRDWLKSYGYRPIRMPLVEPTPLFKRAIGEVTDIVEKEMYSFEDALNGEHLTLRPEGTASCVRAAIQHNLVAGHGPQRLYYHGPMFRHERPQKGRYRQFHQIGVEALGFAGPDIDAEHIIMCARLWDDLGLEDVSLEINSLGAAEERAQHRAALIAYLEQHRDKLDEDGQRRLYTNPLRILDTKNPDLQPVVEAAPRLADYLGDESRAHFDAVQLFLKDAGIPYRINHRLVRGLDYYNRTVFEWVTTRLGAQGTVCAGGRYDGLVAQLGGKPQPAAGFAMGVERLLALWQESGGEPERQAPDVYVVHLGEAAQRLAFQAAEALRGHGFSAVLHCGGGSFKSQMKKADGSGASIAVVIGEDEAAAGEVGVKPLRGPGGQQRVTLAALAEAVGGVLYSDQGDDDGGV.

It belongs to the class-II aminoacyl-tRNA synthetase family. Homodimer.

It is found in the cytoplasm. It carries out the reaction tRNA(His) + L-histidine + ATP = L-histidyl-tRNA(His) + AMP + diphosphate + H(+). The polypeptide is Histidine--tRNA ligase (Azoarcus sp. (strain BH72)).